The following is a 70-amino-acid chain: U2-agatoxin-Ao1n (70 aa).

Residues 1–20 (MRAIISLLLISAMVFYIIAA) form the signal peptide. A propeptide spanning residues 21–34 (VPEEEGLQLSEDER) is cleaved from the precursor. Disulfide bonds link C37–C53, C44–C58, and C52–C68. L69 is modified (leucine amide).

This sequence belongs to the neurotoxin 01 (U2-agtx) family. In terms of tissue distribution, expressed by the venom gland.

Its subcellular location is the secreted. Functionally, insect active toxin causing rapid but reversible paralysis in crickets. No activity shown in mammals. Does not show effect on mammalian voltage-gated calcium channels. The polypeptide is U2-agatoxin-Ao1n (Agelena orientalis (Funnel-web spider)).